Reading from the N-terminus, the 97-residue chain is Integration host factor subunit alpha (97 aa).

The protein belongs to the bacterial histone-like protein family. In terms of assembly, heterodimer of an alpha and a beta chain.

In terms of biological role, this protein is one of the two subunits of integration host factor, a specific DNA-binding protein that functions in genetic recombination as well as in transcriptional and translational control. In Histophilus somni (strain 2336) (Haemophilus somnus), this protein is Integration host factor subunit alpha.